The sequence spans 243 residues: Urease accessory protein UreF (243 aa).

This sequence belongs to the UreF family. As to quaternary structure, ureD, UreF and UreG form a complex that acts as a GTP-hydrolysis-dependent molecular chaperone, activating the urease apoprotein by helping to assemble the nickel containing metallocenter of UreC. The UreE protein probably delivers the nickel.

The protein localises to the cytoplasm. In terms of biological role, required for maturation of urease via the functional incorporation of the urease nickel metallocenter. The protein is Urease accessory protein UreF of Xanthobacter autotrophicus (strain ATCC BAA-1158 / Py2).